The sequence spans 614 residues: DNA mismatch repair protein MutL (614 aa).

Residues 355–411 (PLSTGRVSEADPSNYATQSKFDEKPRESGSQGQSSSISAPSSYSRGGEYSARSQPEL) form a disordered region. A compositionally biased stretch (low complexity) spans 382–401 (SGSQGQSSSISAPSSYSRGG).

This sequence belongs to the DNA mismatch repair MutL/HexB family.

Functionally, this protein is involved in the repair of mismatches in DNA. It is required for dam-dependent methyl-directed DNA mismatch repair. May act as a 'molecular matchmaker', a protein that promotes the formation of a stable complex between two or more DNA-binding proteins in an ATP-dependent manner without itself being part of a final effector complex. This chain is DNA mismatch repair protein MutL, found in Shewanella woodyi (strain ATCC 51908 / MS32).